Here is a 440-residue protein sequence, read N- to C-terminus: Xylose isomerase (440 aa).

Catalysis depends on residues His-101 and Asp-104. Mg(2+) is bound by residues Glu-232, Glu-268, His-271, Asp-296, Asp-307, Asp-309, and Asp-339.

It belongs to the xylose isomerase family. In terms of assembly, homotetramer. Requires Mg(2+) as cofactor.

The protein localises to the cytoplasm. The catalysed reaction is alpha-D-xylose = alpha-D-xylulofuranose. This chain is Xylose isomerase, found in Salmonella dublin (strain CT_02021853).